The following is an 83-amino-acid chain: MAGGSTGERPFTDIITSIRYWVIHSITIPALFIAGWLFVSTGLAYDAFGTPRPNEYFTQDRTEVPIVSDRYSAKQQVDRFSAK.

The helical transmembrane segment at 22 to 36 (VIHSITIPALFIAGW) threads the bilayer. Residue His24 coordinates heme.

It belongs to the PsbE/PsbF family. Heterodimer of an alpha subunit and a beta subunit. PSII is composed of 1 copy each of membrane proteins PsbA, PsbB, PsbC, PsbD, PsbE, PsbF, PsbH, PsbI, PsbJ, PsbK, PsbL, PsbM, PsbT, PsbX, PsbY, PsbZ, Psb30/Ycf12, peripheral proteins PsbO, CyanoQ (PsbQ), PsbU, PsbV and a large number of cofactors. It forms dimeric complexes. The cofactor is heme b.

The protein localises to the cellular thylakoid membrane. This b-type cytochrome is tightly associated with the reaction center of photosystem II (PSII). PSII is a light-driven water:plastoquinone oxidoreductase that uses light energy to abstract electrons from H(2)O, generating O(2) and a proton gradient subsequently used for ATP formation. It consists of a core antenna complex that captures photons, and an electron transfer chain that converts photonic excitation into a charge separation. This is Cytochrome b559 subunit alpha from Synechococcus elongatus (strain ATCC 33912 / PCC 7942 / FACHB-805) (Anacystis nidulans R2).